A 148-amino-acid polypeptide reads, in one-letter code: Small ribosomal subunit protein uS12 (148 aa).

It belongs to the universal ribosomal protein uS12 family. In terms of assembly, part of the 30S ribosomal subunit.

Functionally, with S4 and S5 plays an important role in translational accuracy. Located at the interface of the 30S and 50S subunits. This is Small ribosomal subunit protein uS12 from Methanocaldococcus jannaschii (strain ATCC 43067 / DSM 2661 / JAL-1 / JCM 10045 / NBRC 100440) (Methanococcus jannaschii).